The chain runs to 129 residues: MNPPNSTCELGRQGEALAATYLQNEGYQILERNYRFRHNEIDLIALDGSTLCFVEVKARLSNKAGSPLDAVTVAKQREIIRAAQAYLTFSGQECDCRFDVIGVNVHAMHEARISSFTIEHIKDAFWVEQ.

The protein belongs to the UPF0102 family.

The sequence is that of UPF0102 protein Cag_1992 from Chlorobium chlorochromatii (strain CaD3).